The chain runs to 134 residues: Complexin-1 (134 aa).

2 disordered regions span residues 1–60 (MEFV…AERE) and 74–114 (KKEE…EEDE). Residues 15–60 (DMGKMLGGDEEKDPDAAKKEEERQEALRQAEEERKAKYAKMEAERE) are compositionally biased toward basic and acidic residues. Residues 29 to 64 (DAAKKEEERQEALRQAEEERKAKYAKMEAEREVMRQ) are a coiled coil. The segment at 48-70 (RKAKYAKMEAEREVMRQGIRDKY) is interaction with the SNARE complex.

This sequence belongs to the complexin/synaphin family. In terms of assembly, binds to the SNARE core complex containing SNAP25, VAMP2 and STX1A. In terms of tissue distribution, nervous system, and pancreatic islet cells. Present in many brain regions, including hippocampus and cerebellum. In the retina, present at conventional amacrine cell synapses (at protein level).

It is found in the cytoplasm. The protein resides in the cytosol. Its subcellular location is the perikaryon. The protein localises to the presynapse. Functionally, positively regulates a late step in exocytosis of various cytoplasmic vesicles, such as synaptic vesicles and other secretory vesicles. Organizes the SNAREs into a cross-linked zigzag topology that, when interposed between the vesicle and plasma membranes, is incompatible with fusion, thereby preventing SNAREs from releasing neurotransmitters until an action potential arrives at the synapse. Also involved in glucose-induced secretion of insulin by pancreatic beta-cells. Essential for motor behavior. In Mus musculus (Mouse), this protein is Complexin-1 (Cplx1).